Reading from the N-terminus, the 347-residue chain is UDP-N-acetylenolpyruvoylglucosamine reductase (347 aa).

Positions 23–197 (LPARAARLLR…LRVRFRLPQA (175 aa)) constitute an FAD-binding PCMH-type domain. The active site involves arginine 174. Serine 247 (proton donor) is an active-site residue. Glutamate 343 is an active-site residue.

The protein belongs to the MurB family. FAD is required as a cofactor.

It is found in the cytoplasm. It carries out the reaction UDP-N-acetyl-alpha-D-muramate + NADP(+) = UDP-N-acetyl-3-O-(1-carboxyvinyl)-alpha-D-glucosamine + NADPH + H(+). The protein operates within cell wall biogenesis; peptidoglycan biosynthesis. Cell wall formation. In Azoarcus sp. (strain BH72), this protein is UDP-N-acetylenolpyruvoylglucosamine reductase.